Here is a 171-residue protein sequence, read N- to C-terminus: Adenine phosphoribosyltransferase (171 aa).

The protein belongs to the purine/pyrimidine phosphoribosyltransferase family. As to quaternary structure, homodimer.

It localises to the cytoplasm. It catalyses the reaction AMP + diphosphate = 5-phospho-alpha-D-ribose 1-diphosphate + adenine. The protein operates within purine metabolism; AMP biosynthesis via salvage pathway; AMP from adenine: step 1/1. Its function is as follows. Catalyzes a salvage reaction resulting in the formation of AMP, that is energically less costly than de novo synthesis. This is Adenine phosphoribosyltransferase from Rhodospirillum centenum (strain ATCC 51521 / SW).